Reading from the N-terminus, the 377-residue chain is 23S rRNA (uracil(747)-C(5))-methyltransferase RlmC (377 aa).

[4Fe-4S] cluster contacts are provided by Cys3, Cys11, Cys14, and Cys87. S-adenosyl-L-methionine-binding residues include Gln212, Phe241, Glu262, and Asn307. The active-site Nucleophile is Cys334.

Belongs to the class I-like SAM-binding methyltransferase superfamily. RNA M5U methyltransferase family. RlmC subfamily.

It carries out the reaction uridine(747) in 23S rRNA + S-adenosyl-L-methionine = 5-methyluridine(747) in 23S rRNA + S-adenosyl-L-homocysteine + H(+). In terms of biological role, catalyzes the formation of 5-methyl-uridine at position 747 (m5U747) in 23S rRNA. This Xenorhabdus bovienii (strain SS-2004) (Xenorhabdus nematophila subsp. bovienii) protein is 23S rRNA (uracil(747)-C(5))-methyltransferase RlmC.